A 130-amino-acid chain; its full sequence is Small ribosomal subunit protein uS8 (130 aa).

This sequence belongs to the universal ribosomal protein uS8 family.

The protein is Small ribosomal subunit protein uS8 (RPS22) of Candida glabrata (strain ATCC 2001 / BCRC 20586 / JCM 3761 / NBRC 0622 / NRRL Y-65 / CBS 138) (Yeast).